The primary structure comprises 427 residues: Dihydroorotase (427 aa).

Zn(2+) contacts are provided by His60 and His62. Substrate is bound by residues 62-64 (HLR) and Asn94. The Zn(2+) site is built by Asp152, His179, and His232. Asn278 provides a ligand contact to substrate. Asp305 lines the Zn(2+) pocket. Asp305 is an active-site residue. Substrate contacts are provided by residues His309 and 323-324 (FG).

Belongs to the metallo-dependent hydrolases superfamily. DHOase family. Class I DHOase subfamily. Zn(2+) serves as cofactor.

It catalyses the reaction (S)-dihydroorotate + H2O = N-carbamoyl-L-aspartate + H(+). It participates in pyrimidine metabolism; UMP biosynthesis via de novo pathway; (S)-dihydroorotate from bicarbonate: step 3/3. Its function is as follows. Catalyzes the reversible cyclization of carbamoyl aspartate to dihydroorotate. The protein is Dihydroorotase of Bacillus caldolyticus.